The primary structure comprises 31 residues: Cyclotide vinc-B (31 aa).

The segment at residues 1–31 is a cross-link (cyclopeptide (Gly-Asn)); it reads GSIPACGESCFKGKCYTPGCTCSKYPLCAKN. 3 cysteine pairs are disulfide-bonded: C6–C20, C10–C22, and C15–C28.

The protein belongs to the cyclotide family. In terms of processing, this is a cyclic peptide.

In terms of biological role, probably participates in a plant defense mechanism. The chain is Cyclotide vinc-B from Viola inconspicua.